The sequence spans 284 residues: MEMO1 family protein SSO0066 (284 aa).

Belongs to the MEMO1 family.

The protein is MEMO1 family protein SSO0066 of Saccharolobus solfataricus (strain ATCC 35092 / DSM 1617 / JCM 11322 / P2) (Sulfolobus solfataricus).